We begin with the raw amino-acid sequence, 441 residues long: ATP-dependent protease ATPase subunit HslU (441 aa).

ATP contacts are provided by residues Ile-18 and 60-65 (GVGKTE). The segment at 131–158 (ILDALLPRPRGSEYDHARDESSTRQTFR) is disordered. Residues 140 to 152 (RGSEYDHARDESS) are compositionally biased toward basic and acidic residues. Positions 254, 320, and 392 each coordinate ATP.

It belongs to the ClpX chaperone family. HslU subfamily. In terms of assembly, a double ring-shaped homohexamer of HslV is capped on each side by a ring-shaped HslU homohexamer. The assembly of the HslU/HslV complex is dependent on binding of ATP.

It localises to the cytoplasm. Functionally, ATPase subunit of a proteasome-like degradation complex; this subunit has chaperone activity. The binding of ATP and its subsequent hydrolysis by HslU are essential for unfolding of protein substrates subsequently hydrolyzed by HslV. HslU recognizes the N-terminal part of its protein substrates and unfolds these before they are guided to HslV for hydrolysis. This chain is ATP-dependent protease ATPase subunit HslU, found in Chromohalobacter salexigens (strain ATCC BAA-138 / DSM 3043 / CIP 106854 / NCIMB 13768 / 1H11).